Reading from the N-terminus, the 108-residue chain is Complement inhibitor CirpT2 (108 aa).

A signal peptide spans 1–19; that stretch reads MRTLVASLCVFAVFSAVCC. 4 disulfide bridges follow: cysteine 40/cysteine 64, cysteine 59/cysteine 98, cysteine 76/cysteine 99, and cysteine 85/cysteine 104.

It belongs to the CirpT family. Expressed in salivary glands.

The protein localises to the secreted. Complement inhibitor. Prevents complement-mediated activation of C5 by sterically preventing direct binding of C5 to its convertase (binding with domains MG4 and MG5). Binds C5 at a different binding site than the other tick complement inhibitors OmCI and RaCI3, and the drug eculizumab. Inhibits the complement in human, rat and guinea pig, and also shows a reduced inhibition in rabbit and pig. This chain is Complement inhibitor CirpT2, found in Dermacentor andersoni (Rocky mountain wood tick).